We begin with the raw amino-acid sequence, 393 residues long: CCA-adding enzyme (393 aa).

ATP-binding residues include G27 and R30. The CTP site is built by G27 and R30. Residues D40 and D42 each coordinate Mg(2+). ATP-binding residues include R111, D154, R157, R160, and R163. 5 residues coordinate CTP: R111, D154, R157, R160, and R163.

It belongs to the tRNA nucleotidyltransferase/poly(A) polymerase family. Bacterial CCA-adding enzyme type 3 subfamily. In terms of assembly, homodimer. Mg(2+) serves as cofactor.

It catalyses the reaction a tRNA precursor + 2 CTP + ATP = a tRNA with a 3' CCA end + 3 diphosphate. It carries out the reaction a tRNA with a 3' CCA end + 2 CTP + ATP = a tRNA with a 3' CCACCA end + 3 diphosphate. Catalyzes the addition and repair of the essential 3'-terminal CCA sequence in tRNAs without using a nucleic acid template. Adds these three nucleotides in the order of C, C, and A to the tRNA nucleotide-73, using CTP and ATP as substrates and producing inorganic pyrophosphate. tRNA 3'-terminal CCA addition is required both for tRNA processing and repair. Also involved in tRNA surveillance by mediating tandem CCA addition to generate a CCACCA at the 3' terminus of unstable tRNAs. While stable tRNAs receive only 3'-terminal CCA, unstable tRNAs are marked with CCACCA and rapidly degraded. The protein is CCA-adding enzyme of Listeria innocua serovar 6a (strain ATCC BAA-680 / CLIP 11262).